A 733-amino-acid chain; its full sequence is Polyribonucleotide nucleotidyltransferase (733 aa).

The Mg(2+) site is built by aspartate 488 and aspartate 494. One can recognise a KH domain in the interval 555 to 614 (PRIEVMNIAVDKIRDVIGTGGKVIREIVEQTGAKINIEDDGTIRIASADAKTIEAAKRWI). Residues 624–692 (GVIYQGTVVK…ERGKVRLSMK (69 aa)) enclose the S1 motif domain. The span at 711-722 (EQEKYTEETHKS) shows a compositional bias: basic and acidic residues. The segment at 711–733 (EQEKYTEETHKSENKRRRKKKEE) is disordered. Residues 723-733 (ENKRRRKKKEE) are compositionally biased toward basic residues.

Belongs to the polyribonucleotide nucleotidyltransferase family. The cofactor is Mg(2+).

Its subcellular location is the cytoplasm. The catalysed reaction is RNA(n+1) + phosphate = RNA(n) + a ribonucleoside 5'-diphosphate. Involved in mRNA degradation. Catalyzes the phosphorolysis of single-stranded polyribonucleotides processively in the 3'- to 5'-direction. This is Polyribonucleotide nucleotidyltransferase from Bartonella henselae (strain ATCC 49882 / DSM 28221 / CCUG 30454 / Houston 1) (Rochalimaea henselae).